The sequence spans 345 residues: Phosphoribosylformylglycinamidine cyclo-ligase (345 aa).

This sequence belongs to the AIR synthase family. Homodimer.

It is found in the cytoplasm. The enzyme catalyses 2-formamido-N(1)-(5-O-phospho-beta-D-ribosyl)acetamidine + ATP = 5-amino-1-(5-phospho-beta-D-ribosyl)imidazole + ADP + phosphate + H(+). It functions in the pathway purine metabolism; IMP biosynthesis via de novo pathway; 5-amino-1-(5-phospho-D-ribosyl)imidazole from N(2)-formyl-N(1)-(5-phospho-D-ribosyl)glycinamide: step 2/2. This is Phosphoribosylformylglycinamidine cyclo-ligase from Escherichia coli O157:H7.